The chain runs to 115 residues: Large ribosomal subunit protein uL22 (115 aa).

This sequence belongs to the universal ribosomal protein uL22 family. As to quaternary structure, part of the 50S ribosomal subunit.

Its function is as follows. This protein binds specifically to 23S rRNA; its binding is stimulated by other ribosomal proteins, e.g. L4, L17, and L20. It is important during the early stages of 50S assembly. It makes multiple contacts with different domains of the 23S rRNA in the assembled 50S subunit and ribosome. The globular domain of the protein is located near the polypeptide exit tunnel on the outside of the subunit, while an extended beta-hairpin is found that lines the wall of the exit tunnel in the center of the 70S ribosome. This chain is Large ribosomal subunit protein uL22, found in Limosilactobacillus reuteri subsp. reuteri (strain JCM 1112) (Lactobacillus reuteri).